Reading from the N-terminus, the 881-residue chain is Alanine--tRNA ligase (881 aa).

Residues His566, His570, Cys668, and His672 each coordinate Zn(2+).

Belongs to the class-II aminoacyl-tRNA synthetase family. It depends on Zn(2+) as a cofactor.

The protein resides in the cytoplasm. It catalyses the reaction tRNA(Ala) + L-alanine + ATP = L-alanyl-tRNA(Ala) + AMP + diphosphate. Its function is as follows. Catalyzes the attachment of alanine to tRNA(Ala) in a two-step reaction: alanine is first activated by ATP to form Ala-AMP and then transferred to the acceptor end of tRNA(Ala). Also edits incorrectly charged Ser-tRNA(Ala) and Gly-tRNA(Ala) via its editing domain. The chain is Alanine--tRNA ligase from Frankia alni (strain DSM 45986 / CECT 9034 / ACN14a).